The primary structure comprises 772 residues: Lon protease (772 aa).

The 195-residue stretch at 6–200 (YPTLPLKNTV…LMHRYLNHEV (195 aa)) folds into the Lon N-terminal domain. Position 352–359 (352–359 (GPPGVGKT)) interacts with ATP. The Lon proteolytic domain maps to 588–769 (QLAPGVAAGL…EEVLAEAIPD (182 aa)). Catalysis depends on residues Ser675 and Lys718.

The protein belongs to the peptidase S16 family. Homohexamer. Organized in a ring with a central cavity.

It localises to the cytoplasm. The enzyme catalyses Hydrolysis of proteins in presence of ATP.. Its function is as follows. ATP-dependent serine protease that mediates the selective degradation of mutant and abnormal proteins as well as certain short-lived regulatory proteins. Required for cellular homeostasis and for survival from DNA damage and developmental changes induced by stress. Degrades polypeptides processively to yield small peptide fragments that are 5 to 10 amino acids long. Binds to DNA in a double-stranded, site-specific manner. The chain is Lon protease from Nitrosococcus oceani (strain ATCC 19707 / BCRC 17464 / JCM 30415 / NCIMB 11848 / C-107).